The sequence spans 413 residues: CinA-like protein (413 aa).

The protein belongs to the CinA family.

This Desulfotalea psychrophila (strain LSv54 / DSM 12343) protein is CinA-like protein.